We begin with the raw amino-acid sequence, 492 residues long: Regulatory protein ViaA (492 aa).

The protein belongs to the ViaA family. In terms of assembly, homodimer. Interacts with RavA.

The protein localises to the cytoplasm. Functionally, component of the RavA-ViaA chaperone complex, which may act on the membrane to optimize the function of some of the respiratory chains. ViaA stimulates the ATPase activity of RavA. The polypeptide is Regulatory protein ViaA (Pectobacterium carotovorum subsp. carotovorum (strain PC1)).